The primary structure comprises 513 residues: ATP synthase subunit alpha (513 aa).

Position 169 to 176 (169 to 176) interacts with ATP; sequence GDRQTGKT.

The protein belongs to the ATPase alpha/beta chains family. F-type ATPases have 2 components, CF(1) - the catalytic core - and CF(0) - the membrane proton channel. CF(1) has five subunits: alpha(3), beta(3), gamma(1), delta(1), epsilon(1). CF(0) has three main subunits: a(1), b(2) and c(9-12). The alpha and beta chains form an alternating ring which encloses part of the gamma chain. CF(1) is attached to CF(0) by a central stalk formed by the gamma and epsilon chains, while a peripheral stalk is formed by the delta and b chains.

Its subcellular location is the cell inner membrane. The enzyme catalyses ATP + H2O + 4 H(+)(in) = ADP + phosphate + 5 H(+)(out). Produces ATP from ADP in the presence of a proton gradient across the membrane. The alpha chain is a regulatory subunit. The protein is ATP synthase subunit alpha of Klebsiella pneumoniae subsp. pneumoniae (strain ATCC 700721 / MGH 78578).